The sequence spans 554 residues: Urocanate hydratase (554 aa).

NAD(+)-binding positions include 50 to 51, glutamine 128, 174 to 176, glutamate 194, arginine 199, 240 to 241, 261 to 265, 271 to 272, and tyrosine 320; these read GG, GMG, NA, QTSAH, and YI. The active site involves cysteine 408. Glycine 490 serves as a coordination point for NAD(+).

Belongs to the urocanase family. The cofactor is NAD(+).

The protein localises to the cytoplasm. It carries out the reaction 4-imidazolone-5-propanoate = trans-urocanate + H2O. It functions in the pathway amino-acid degradation; L-histidine degradation into L-glutamate; N-formimidoyl-L-glutamate from L-histidine: step 2/3. In terms of biological role, catalyzes the conversion of urocanate to 4-imidazolone-5-propionate. The sequence is that of Urocanate hydratase from Rubrobacter xylanophilus (strain DSM 9941 / JCM 11954 / NBRC 16129 / PRD-1).